Reading from the N-terminus, the 420-residue chain is Serine--tRNA ligase (420 aa).

229-231 lines the L-serine pocket; it reads TAE. Position 260 to 262 (260 to 262) interacts with ATP; the sequence is RAE. Glutamate 283 contributes to the L-serine binding site. 347–350 is an ATP binding site; sequence EISS. Serine 382 serves as a coordination point for L-serine.

The protein belongs to the class-II aminoacyl-tRNA synthetase family. Type-1 seryl-tRNA synthetase subfamily. As to quaternary structure, homodimer. The tRNA molecule binds across the dimer.

The protein localises to the cytoplasm. It carries out the reaction tRNA(Ser) + L-serine + ATP = L-seryl-tRNA(Ser) + AMP + diphosphate + H(+). It catalyses the reaction tRNA(Sec) + L-serine + ATP = L-seryl-tRNA(Sec) + AMP + diphosphate + H(+). The protein operates within aminoacyl-tRNA biosynthesis; selenocysteinyl-tRNA(Sec) biosynthesis; L-seryl-tRNA(Sec) from L-serine and tRNA(Sec): step 1/1. Catalyzes the attachment of serine to tRNA(Ser). Is also able to aminoacylate tRNA(Sec) with serine, to form the misacylated tRNA L-seryl-tRNA(Sec), which will be further converted into selenocysteinyl-tRNA(Sec). The polypeptide is Serine--tRNA ligase (Caldicellulosiruptor bescii (strain ATCC BAA-1888 / DSM 6725 / KCTC 15123 / Z-1320) (Anaerocellum thermophilum)).